A 501-amino-acid chain; its full sequence is Proline--tRNA ligase (501 aa).

It belongs to the class-II aminoacyl-tRNA synthetase family. ProS type 3 subfamily. Homodimer.

The protein resides in the cytoplasm. It carries out the reaction tRNA(Pro) + L-proline + ATP = L-prolyl-tRNA(Pro) + AMP + diphosphate. In terms of biological role, catalyzes the attachment of proline to tRNA(Pro) in a two-step reaction: proline is first activated by ATP to form Pro-AMP and then transferred to the acceptor end of tRNA(Pro). The protein is Proline--tRNA ligase of Halobacterium salinarum (strain ATCC 29341 / DSM 671 / R1).